A 166-amino-acid polypeptide reads, in one-letter code: Large ribosomal subunit protein uL10 (166 aa).

The protein belongs to the universal ribosomal protein uL10 family. In terms of assembly, part of the ribosomal stalk of the 50S ribosomal subunit. The N-terminus interacts with L11 and the large rRNA to form the base of the stalk. The C-terminus forms an elongated spine to which L12 dimers bind in a sequential fashion forming a multimeric L10(L12)X complex.

Forms part of the ribosomal stalk, playing a central role in the interaction of the ribosome with GTP-bound translation factors. In Streptococcus pyogenes serotype M1, this protein is Large ribosomal subunit protein uL10 (rplJ).